Reading from the N-terminus, the 308-residue chain is Probable peptidyl-prolyl cis-trans isomerase B (308 aa).

Positions 74–123 (DHQSTTSATPTDSASTSPPQAATAPPLPPFKPSANLGANCQYPPSPDKAV) are disordered. Positions 77-97 (STTSATPTDSASTSPPQAATA) are enriched in low complexity. The PPIase cyclophilin-type domain maps to 139-307 (AQVSVSMVTN…TEVTITSVLL (169 aa)).

This sequence belongs to the cyclophilin-type PPIase family.

It carries out the reaction [protein]-peptidylproline (omega=180) = [protein]-peptidylproline (omega=0). In terms of biological role, PPIases accelerate the folding of proteins. It catalyzes the cis-trans isomerization of proline imidic peptide bonds in oligopeptides. The chain is Probable peptidyl-prolyl cis-trans isomerase B (ppiB) from Mycobacterium tuberculosis (strain CDC 1551 / Oshkosh).